A 97-amino-acid chain; its full sequence is YcgL domain-containing protein PSPTO_3921 (97 aa).

The region spanning 3–87 (RICSIYRSPK…AEDEYIEHLP (85 aa)) is the YcgL domain.

The protein is YcgL domain-containing protein PSPTO_3921 of Pseudomonas syringae pv. tomato (strain ATCC BAA-871 / DC3000).